Reading from the N-terminus, the 331-residue chain is D-alanine--D-alanine ligase (331 aa).

The 207-residue stretch at Lys-121 to Arg-327 folds into the ATP-grasp domain. Residue Ala-151–Glu-206 participates in ATP binding. Mg(2+)-binding residues include Asp-281, Glu-294, and Asn-296.

It belongs to the D-alanine--D-alanine ligase family. Mg(2+) is required as a cofactor. It depends on Mn(2+) as a cofactor.

It localises to the cytoplasm. The enzyme catalyses 2 D-alanine + ATP = D-alanyl-D-alanine + ADP + phosphate + H(+). It functions in the pathway cell wall biogenesis; peptidoglycan biosynthesis. In terms of biological role, cell wall formation. The polypeptide is D-alanine--D-alanine ligase (Vibrio atlanticus (strain LGP32) (Vibrio splendidus (strain Mel32))).